The sequence spans 102 residues: UPF0213 protein in potE 3'region (102 aa).

Residues 6–81 (SPWHLYMLRL…KQLSKTQKER (76 aa)) form the GIY-YIG domain.

This sequence belongs to the UPF0213 family.

The sequence is that of UPF0213 protein in potE 3'region from Serratia liquefaciens.